Here is a 23-residue protein sequence, read N- to C-terminus: Alpha-amanitin proprotein (23 aa).

Ile1 is subject to (3R,4R)-4,5-dihydroxyisoleucine; in form alpha-amanitin. Ile1 is subject to (3R,4S)-4-hydroxyisoleucine; in form gamma-amanitin. The cyclopeptide (Ile-Pro) cross-link spans 1–8 (IWGIGCNP). A cross-link (2'-cysteinyl-6'-hydroxytryptophan sulfoxide (Trp-Cys)) is located at residues 2–6 (WGIGC). Pro8 is modified (4-hydroxyproline). A propeptide spanning residues 9–23 (CVGDEVTALITRGEA) is cleaved from the precursor.

It belongs to the MSDIN fungal toxin family. Post-translationally, processed by the macrocyclase-peptidase enzyme POPB to yield a toxic cyclic decapeptide. POPB first removes 10 residues from the N-terminus. Conformational trapping of the remaining peptide forces the enzyme to release this intermediate rather than proceed to macrocyclization. The enzyme rebinds the remaining peptide in a different conformation and catalyzes macrocyclization of the N-terminal 8 residues.

In terms of biological role, major toxin belonging to the bicyclic octapeptides amatoxins that acts by binding non-competitively to RNA polymerase II and greatly slowing the elongation of transcripts from target promoters. The chain is Alpha-amanitin proprotein from Amanita fuligineoides.